An 834-amino-acid polypeptide reads, in one-letter code: Striatin-interacting protein 2 (834 aa).

The disordered stretch occupies residues 1-48 (MEDPAAPGTGGPPANGNGNGGGKGKQAAPKGREAFRSQRRESEGSVDC). Residues 8-24 (GTGGPPANGNGNGGGKG) are compositionally biased toward gly residues. Over residues 30–43 (KGREAFRSQRRESE) the composition is skewed to basic and acidic residues. Phosphoserine occurs at positions 318, 329, and 354. A disordered region spans residues 321–345 (SYTLDLGESQLAPPPSKLRGRRGSR). Residues 360 to 382 (ERDLFKTEEPATEEEEESAGDGE) form a disordered region. The segment covering 369–379 (PATEEEEESAG) has biased composition (acidic residues).

It belongs to the STRIP family. As to quaternary structure, part of the core of STRIPAK complexes composed of PP2A catalytic and scaffolding subunits, the striatins (PP2A regulatory subunits), the striatin-associated proteins MOB4, STRIP1 and STRIP2, PDCD10 and members of the STE20 kinases, such as STK24 and STK26. Interacts with CTTNBP2NL.

It is found in the cytoplasm. Functionally, plays a role in the regulation of cell morphology and cytoskeletal organization. Required in the control of cell shape. Calmodulin-binding scaffolding protein which is the center of the striatin-interacting phosphatase and kinase (STRIPAK) complexes. STRIPAK complexes have critical roles in protein (de)phosphorylation and are regulators of multiple signaling pathways including Hippo, MAPK, nuclear receptor and cytoskeleton remodeling. Different types of STRIPAK complexes are involved in a variety of biological processes such as cell growth, differentiation, apoptosis, metabolism and immune regulation. This chain is Striatin-interacting protein 2, found in Homo sapiens (Human).